The sequence spans 279 residues: tRNA (carboxymethyluridine(34)-5-O)-methyltransferase (279 aa).

A disordered region spans residues 172–236 (KSKSKPKTKS…QQQDQEQERE (65 aa)). The span at 200–229 (PKERSEYLQRWKEEQQRSKSLDDNDEKQQQ) shows a compositional bias: basic and acidic residues.

In terms of assembly, interacts with TRM112.

It is found in the cytoplasm. It localises to the nucleus. It carries out the reaction 5-(carboxymethyl)uridine(34) in tRNA + S-adenosyl-L-methionine = 5-(2-methoxy-2-oxoethyl)uridine(34) in tRNA + S-adenosyl-L-homocysteine. Its function is as follows. Required for the methylation of the wobble bases at position 34 in tRNA. Appears to have a role in stress-response. This Saccharomyces cerevisiae (strain ATCC 204508 / S288c) (Baker's yeast) protein is tRNA (carboxymethyluridine(34)-5-O)-methyltransferase (TRM9).